The primary structure comprises 337 residues: Ornithine carbamoyltransferase (337 aa).

Residues 57-60, Q84, R108, and 135-138 contribute to the carbamoyl phosphate site; these read STRT and HPTQ. Residues N167, D231, and 235–236 contribute to the L-ornithine site; that span reads SM. Carbamoyl phosphate is bound by residues 272–273 and R317; that span reads CL.

It belongs to the aspartate/ornithine carbamoyltransferase superfamily. OTCase family.

The protein resides in the cytoplasm. The catalysed reaction is carbamoyl phosphate + L-ornithine = L-citrulline + phosphate + H(+). It functions in the pathway amino-acid degradation; L-arginine degradation via ADI pathway; carbamoyl phosphate from L-arginine: step 2/2. Its function is as follows. Reversibly catalyzes the transfer of the carbamoyl group from carbamoyl phosphate (CP) to the N(epsilon) atom of ornithine (ORN) to produce L-citrulline. This Streptococcus equi subsp. zooepidemicus (strain MGCS10565) protein is Ornithine carbamoyltransferase.